The following is a 1096-amino-acid chain: Inactive phospholipase C-like protein 1 (1096 aa).

The tract at residues methionine 1–proline 101 is disordered. Residues glycine 26–glycine 41 are compositionally biased toward low complexity. Serine 48 and serine 78 each carry phosphoserine. The tract at residues proline 83–leucine 222 is interaction with PPP1C. Threonine 94 bears the Phosphothreonine mark. A Phosphoserine modification is found at serine 96. In terms of domain architecture, PH spans serine 114–serine 224. In terms of domain architecture, PI-PLC X-box spans glutamine 399–lysine 543. Residues lysine 544–arginine 568 are interaction with GABA A beta subunit. The residue at position 557 (threonine 557) is a Phosphothreonine. Phosphoserine is present on serine 570. Residues leucine 586 to arginine 702 enclose the PI-PLC Y-box domain. One can recognise a C2 domain in the interval arginine 702–serine 831. A coiled-coil region spans residues aspartate 1040 to cysteine 1060. Positions lysine 1067–leucine 1096 are disordered. Over residues alanine 1075–leucine 1096 the composition is skewed to basic and acidic residues. Serine 1080 is subject to Phosphoserine.

It belongs to the PRIP family. Interacts with PPP2CA, GABA receptor beta subunits, GABA receptor gamma-2 subunits. Interacts with Ins(1,4,5)P3, Ins(1,4,5,6)P4, GABARAP, and PPP1C. May form a ternary complex with GABA receptor beta subunit and GABARAP. The formation of a ternary complex with GABA receptor beta subunit and GABARAP could be the key step for facilitating the association of GABARAP with the GABA receptor gamma-2 subunit and to allow it to be transported at the right destination. Phosphorylation of Thr-94 resulted in dissociation of PPP1C from PRIP1. In vitro, phosphorylated by the catalytic subunit of PKA. As to expression, expressed in brain. Found in the granular cell and Purkinje cell layers in the cerebellum; and in the hippocampal pyramidal cells, dentate granule cells and pyramidal granule cells of the cerebral cortex in the cerebrum.

It localises to the cytoplasm. Its function is as follows. Involved in an inositol phospholipid-based intracellular signaling cascade. Shows no PLC activity to phosphatidylinositol 4,5-bisphosphate and phosphatidylinositol. Component in the phospho-dependent endocytosis process of GABA A receptor. Acts as an inhibitor of PPP1C. The polypeptide is Inactive phospholipase C-like protein 1 (Plcl1) (Rattus norvegicus (Rat)).